A 294-amino-acid chain; its full sequence is Nitrogenase iron protein (294 aa).

11-18 (GKGGIGKS) serves as a coordination point for ATP. Cys99 is a binding site for [4Fe-4S] cluster. Position 102 is an ADP-ribosylarginine; by dinitrogenase reductase ADP-ribosyltransferase (Arg102). Residue Cys133 participates in [4Fe-4S] cluster binding.

The protein belongs to the NifH/BchL/ChlL family. As to quaternary structure, homodimer. [4Fe-4S] cluster serves as cofactor. The reversible ADP-ribosylation of Arg-102 inactivates the nitrogenase reductase and regulates nitrogenase activity.

It carries out the reaction N2 + 8 reduced [2Fe-2S]-[ferredoxin] + 16 ATP + 16 H2O = H2 + 8 oxidized [2Fe-2S]-[ferredoxin] + 2 NH4(+) + 16 ADP + 16 phosphate + 6 H(+). Functionally, the key enzymatic reactions in nitrogen fixation are catalyzed by the nitrogenase complex, which has 2 components: the iron protein and the molybdenum-iron protein. The sequence is that of Nitrogenase iron protein (nifH) from Bradyrhizobium diazoefficiens (strain JCM 10833 / BCRC 13528 / IAM 13628 / NBRC 14792 / USDA 110).